We begin with the raw amino-acid sequence, 1193 residues long: MEYASTFQRPILFHGGDGASYCFPNRLISPKGISITSGDSKVHSCFRLRRNVAQSGTLNLMNACFSGRFYSGHLHSTKSILGNGHQAKRIPFGFRLRCQGHESLGNADSNDHRIGESSESSDETEATDLKDARVENDTDSLEELKELLHKAIKELEVARLNSTMFEEKAQRISERAIALKDEAATAWLDVNKTLDVIRDTVYEEALAKEAVQTATMALSLAEARLQVIVESLEAGAGNDIPHVSEETEETIDVNDKEEALLAAKDDIKECQVNLDNCESQLSALLSKKDELQKEVDKLNEFAETIQISSLKAEEDVTNIMKLAEQAVAFELEATQRVNDAEIALQRAEKSLSISQTPEETQGQLSDEETSQEDAMVLSGNVEDVTHQVEKESPKDGDLPVVQITAELVPDIVGQRNKKLTQPYESSDHENGKPSVESSKVVEADSEKPKINVQTKKQETQKDLPKEGSSLNSPKASFNKSSRFFSASFFSSNPDGTATVFGSLVGSVKQQWPKLVLGLALLGAGLTLYSNGVGGNNQLLQQPDVTSTSTEDVSSSTKPLIRQVQKLPKRIKKLLEMIPHQEVNEEEASLFDFLWLLLASVIFVPLFQKIPGGSPVLGYLAAGILIGPYGLSIIRNVHGTRAIAEFGVVFLLFNIGLELSVERLSSMKKYVFGLGSAQVLVTAAVVGLLAHYVAGQAGPAAIVIGNGLALSSTAVVLQVLQERGESTSRHGRASFSVLLFQDLAVVVLLILIPLISPNSSKGGIGFQAIAEALGLAAVKAAVAITAIIAGGRLLLRPIYKQIAENRNAEIFSANTLLVILGTSLLTARAGLSMALGAFLAGLLLAETEFSLQVESDIAPYRGLLLGLFFMTVGMSIDPKLLLSNFPVIVGTLGLLIVGKTMLVVIMGKLFGISIISAIRVGLLLAPGGEFAFVAFGEAVNQGIMSPQLSSLLFLVVGISMAITPWLAAGGQLIASRFELHDVRSLLPVESETDDLQGHIIICGFGRVGQIIAQLLSERLIPFVALDVSSDRVTIGRSLDLPVYFGDAGSKEVLHKIGAGRACAAVVALDAPGANYRCVWALSKFYPNVKTFVRAHDVVHGLNLEKAGATAVVPETLEPSLQLAAAVLAQAKLPTSEIANTINEFRTRHLSELTELCEASGSSLGYGYSRTSKPKPQPSDASGDNQIIEGGTVVI.

Residues 1-49 constitute a chloroplast transit peptide; that stretch reads MEYASTFQRPILFHGGDGASYCFPNRLISPKGISITSGDSKVHSCFRLR. The Stromal segment spans residues 50–585; sequence RNVAQSGTLN…MIPHQEVNEE (536 aa). A disordered region spans residues 103-135; the sequence is SLGNADSNDHRIGESSESSDETEATDLKDARVE. Residues 131-355 are a coiled coil; that stretch reads DARVENDTDS…RAEKSLSISQ (225 aa). K168 carries the post-translational modification N6-acetyllysine; by NSI. The segment covering 351–364 has biased composition (polar residues); it reads LSISQTPEETQGQL. 2 disordered regions span residues 351-372 and 421-474; these read LSIS…TSQE and QPYE…NSPK. The span at 439-465 shows a compositional bias: basic and acidic residues; the sequence is KVVEADSEKPKINVQTKKQETQKDLPK. Residues 586-606 traverse the membrane as a helical segment; sequence EASLFDFLWLLLASVIFVPLF. At 607-612 the chain is on the chloroplast intermembrane side; sequence QKIPGG. Residues 613 to 633 form a helical membrane-spanning segment; it reads SPVLGYLAAGILIGPYGLSII. Topologically, residues 634 to 640 are stromal; the sequence is RNVHGTR. Residues 641-661 form a helical membrane-spanning segment; the sequence is AIAEFGVVFLLFNIGLELSVE. The Chloroplast intermembrane segment spans residues 662–668; it reads RLSSMKK. A helical transmembrane segment spans residues 669–689; sequence YVFGLGSAQVLVTAAVVGLLA. At 690-698 the chain is on the stromal side; that stretch reads HYVAGQAGP. Residues 699–719 form a helical membrane-spanning segment; sequence AAIVIGNGLALSSTAVVLQVL. The Chloroplast intermembrane portion of the chain corresponds to 720–733; that stretch reads QERGESTSRHGRAS. Residues 734-754 form a helical membrane-spanning segment; that stretch reads FSVLLFQDLAVVVLLILIPLI. At 755 to 766 the chain is on the stromal side; that stretch reads SPNSSKGGIGFQ. A helical membrane pass occupies residues 767–787; that stretch reads AIAEALGLAAVKAAVAITAII. Topologically, residues 788–827 are chloroplast intermembrane; sequence AGGRLLLRPIYKQIAENRNAEIFSANTLLVILGTSLLTAR. Residues 828-848 form a helical membrane-spanning segment; sequence AGLSMALGAFLAGLLLAETEF. Topologically, residues 849 to 860 are stromal; sequence SLQVESDIAPYR. Residues 861–881 traverse the membrane as a helical segment; sequence GLLLGLFFMTVGMSIDPKLLL. Over 882–883 the chain is Chloroplast intermembrane; that stretch reads SN. The helical transmembrane segment at 884 to 904 threads the bilayer; the sequence is FPVIVGTLGLLIVGKTMLVVI. Residues 905–912 lie on the Stromal side of the membrane; it reads MGKLFGIS. Residues 913–933 form a helical membrane-spanning segment; the sequence is IISAIRVGLLLAPGGEFAFVA. Over 934–948 the chain is Chloroplast intermembrane; the sequence is FGEAVNQGIMSPQLS. Residues 949 to 969 traverse the membrane as a helical segment; it reads SLLFLVVGISMAITPWLAAGG. Topologically, residues 970–1193 are stromal; it reads QLIASRFELH…QIIEGGTVVI (224 aa). Positions 995-1112 constitute an RCK N-terminal domain; the sequence is QGHIIICGFG…EKAGATAVVP (118 aa). Positions 1165 to 1184 are disordered; that stretch reads GYSRTSKPKPQPSDASGDNQ.

This sequence belongs to the monovalent cation:proton antiporter 2 (CPA2) transporter (TC 2.A.37) family. KEA (TC 2.A.37.1) subfamily. Acetylated at Lys-168 by the stromal acetyltransferase enzyme NSI. As to expression, expressed in shoots and roots. Mainly localized to leaf veins, hypocotyls, mesophylls and guard cells. Accumulates at high levels in small and dividing plastids (at protein level).

Its subcellular location is the plastid. It localises to the chloroplast inner membrane. It carries out the reaction K(+)(in) + H(+)(out) = K(+)(out) + H(+)(in). Its activity is regulated as follows. Repressed by sodium ions Na(+). Its function is as follows. Electroneutral K(+)/H(+) efflux antiporter involved in chloroplastic K(+) homeostasis and osmotic adjustment, especially during plastid division and thylakoid membrane formation. Collaboratively with KEA2, adjusts alkaline stromal pH upon light to dark transitions in plastids. Together with KEA2, critical for chloroplast development, including chloroplast RNA-metabolism (e.g. rRNA maturation, polysome loading and RNA-protein interactions) and plastid gene expression (PGE), ion homeostasis, and photosynthesis. Contributes, during early seedling development, to the regulation of photosynthesis and abscisic acid- (ABA-) mediated primary root growth in a sucrose-dependent manner. Involved in the regulation of reactive oxygen and nitrogen species (ROS and RNS) metabolism. Required in roots for rapid hyperosmotic-induced Ca(2+) responses and for osmo-sensory potentiation in hyperosmotic conditions. May counteract resilience to drought and salt stress, involving photorespiratory pathway and stomata closure. The sequence is that of K(+) efflux antiporter 1, chloroplastic from Arabidopsis thaliana (Mouse-ear cress).